Here is a 331-residue protein sequence, read N- to C-terminus: GTP-binding protein RHO5 (331 aa).

Residue 10-17 (GDGAVGKT) coordinates GTP. Positions 51 to 76 (ASSPLELDNGNDKRGSLSSASSSPST) are disordered. Over residues 66 to 75 (SLSSASSSPS) the composition is skewed to low complexity. GTP is bound by residues 87-91 (DTAGQ) and 156-159 (TKSD). Residues Ser-223 and Ser-228 each carry the phosphoserine modification. Phosphothreonine is present on residues Thr-232 and Thr-244. Residues 239 to 331 (TATTNTNGDK…KKKKSKCVIL (93 aa)) are disordered. Residues 258-273 (HHNNSTDSTLPKGSLQ) are compositionally biased toward polar residues. A Glycyl lysine isopeptide (Lys-Gly) (interchain with G-Cter in ubiquitin) cross-link involves residue Lys-276. The segment covering 287 to 297 (GQKDKIHEQSK) has biased composition (basic and acidic residues). Positions 308 to 331 (HHNKQAKPKTRNDKKKKKSKCVIL) are enriched in basic residues. Position 328 is a cysteine methyl ester (Cys-328). Cys-328 carries the S-geranylgeranyl cysteine lipid modification. Residues 329–331 (VIL) constitute a propeptide, removed in mature form.

This sequence belongs to the small GTPase superfamily. Rho family. In terms of assembly, interacts with RGD2.

It localises to the membrane. Its subcellular location is the mitochondrion. Small GTPase that negatively regulates a MAP kinase branch, downstream of SLT2, of the PKC1-mediated signal transduction pathway. With its specific guanine nucleotide exchange factor (GEF), the heterodimeric complex DCK1/LMO1, relocates to mitochondria upon oxidative stress and triggers cell death. The DCK1/LMO1/RHO5 signaling module that mediates mitochondrial turnover under nitrogen starvation conditions via mitophagy. The DCK1/LMO1/RHO5 signaling module also plays a role in cell wall integrity signaling. The chain is GTP-binding protein RHO5 from Saccharomyces cerevisiae (strain ATCC 204508 / S288c) (Baker's yeast).